The sequence spans 428 residues: Transcription factor bHLH91 (428 aa).

The bHLH domain maps to 210–259 (KRKNKPFTTERERRCHLNERYEALKLLIPSPSKGDRASILQDGIDYINEL). The interval 278–320 (RHKNNEVDDNNNNKNLDDHGNEDDDDDDENMEKKPESDVIDQC) is disordered. Residues 297–307 (GNEDDDDDDEN) show a composition bias toward acidic residues.

In terms of assembly, homodimer. As to expression, flowers.

Its subcellular location is the nucleus. The polypeptide is Transcription factor bHLH91 (BHLH91) (Arabidopsis thaliana (Mouse-ear cress)).